Reading from the N-terminus, the 365-residue chain is MSKPAVKSVQSATAKTATRAVNIRQKVKAPKQAKPEGKGSTKPVKDRPRVEIKKALHPRNAHLNGYDFPALISAFPRLKTFVRPTPYGALSIDFADPLAVKTLNAALLKHHYGIGAWDIPQGALCPPIPGRVDYVHYVADLLAEGDKSCAISKARVLDIGTGANGIYPILGSQVYGWQFVASDISAHSLTNVQSIIEQNPALQGRISLRLQPDDKAVFKGIVQPEERFELTLCNPPFHASMAEASEGTKRKVNNLQLNRGSSVKAAPKLNFGGQAAELWCQGGERQFLATMIRESQMFADQCLWFTSLVSKQENLKPCYQALAQLKVDTVKTIEMQQGNKITRVLAWSFQSAAKRKLWRAEHLAR.

Residues 1–48 (MSKPAVKSVQSATAKTATRAVNIRQKVKAPKQAKPEGKGSTKPVKDRP) are disordered. Basic and acidic residues predominate over residues 33–48 (AKPEGKGSTKPVKDRP).

Belongs to the methyltransferase superfamily. METTL16/RlmF family.

It localises to the cytoplasm. It catalyses the reaction adenosine(1618) in 23S rRNA + S-adenosyl-L-methionine = N(6)-methyladenosine(1618) in 23S rRNA + S-adenosyl-L-homocysteine + H(+). Its function is as follows. Specifically methylates the adenine in position 1618 of 23S rRNA. This is Ribosomal RNA large subunit methyltransferase F from Shewanella baltica (strain OS223).